Reading from the N-terminus, the 95-residue chain is UPF0381 protein HI_0400 (95 aa).

Belongs to the UPF0381 family.

The polypeptide is UPF0381 protein HI_0400 (Haemophilus influenzae (strain ATCC 51907 / DSM 11121 / KW20 / Rd)).